Here is a 444-residue protein sequence, read N- to C-terminus: Chromosome partition protein MukF (444 aa).

The interval 211-239 (LDETSGNLRELQDTLNAAGDKLQAQLLRI) is leucine-zipper.

It belongs to the MukF family. Interacts, and probably forms a ternary complex, with MukE and MukB via its C-terminal region. The complex formation is stimulated by calcium or magnesium. It is required for an interaction between MukE and MukB.

It localises to the cytoplasm. The protein resides in the nucleoid. Functionally, involved in chromosome condensation, segregation and cell cycle progression. May participate in facilitating chromosome segregation by condensation DNA from both sides of a centrally located replisome during cell division. Not required for mini-F plasmid partitioning. Probably acts via its interaction with MukB and MukE. Overexpression results in anucleate cells. It has a calcium binding activity. This chain is Chromosome partition protein MukF, found in Actinobacillus succinogenes (strain ATCC 55618 / DSM 22257 / CCUG 43843 / 130Z).